We begin with the raw amino-acid sequence, 304 residues long: Large ribosomal subunit protein uL2 (304 aa).

Residues 246–282 (HTRGTAMNPVDHPHGGGEGRTRGKHPESPWGWKTKGY) are disordered. Residues 256-272 (DHPHGGGEGRTRGKHPE) show a composition bias toward basic and acidic residues.

Belongs to the universal ribosomal protein uL2 family. In terms of assembly, part of the 50S ribosomal subunit. Forms a bridge to the 30S subunit in the 70S ribosome.

Its function is as follows. One of the primary rRNA binding proteins. Required for association of the 30S and 50S subunits to form the 70S ribosome, for tRNA binding and peptide bond formation. It has been suggested to have peptidyltransferase activity; this is somewhat controversial. Makes several contacts with the 16S rRNA in the 70S ribosome. In Aquifex aeolicus (strain VF5), this protein is Large ribosomal subunit protein uL2.